The sequence spans 128 residues: Small ribosomal subunit protein bS6 (128 aa).

It belongs to the bacterial ribosomal protein bS6 family.

Binds together with bS18 to 16S ribosomal RNA. This Thermotoga petrophila (strain ATCC BAA-488 / DSM 13995 / JCM 10881 / RKU-1) protein is Small ribosomal subunit protein bS6.